Reading from the N-terminus, the 184-residue chain is MRGTRAAQRYAKAILSLAKDKNSAEAVNEDMISISKTVVNSRDLENMLTSPVIKDSTKKSALLEIFKDLNTITKGAIDILLENGRIGILHLVARQYIIKFNELNNVRQAVVTTAVPLDKELEAVILSKVKELTGSEASLKSVIDEDIIGGFVLRVGDLQYDASVSRNLRRLERELKDNTYVSKI.

The protein belongs to the ATPase delta chain family. In terms of assembly, F-type ATPases have 2 components, F(1) - the catalytic core - and F(0) - the membrane proton channel. F(1) has five subunits: alpha(3), beta(3), gamma(1), delta(1), epsilon(1). F(0) has three main subunits: a(1), b(2) and c(10-14). The alpha and beta chains form an alternating ring which encloses part of the gamma chain. F(1) is attached to F(0) by a central stalk formed by the gamma and epsilon chains, while a peripheral stalk is formed by the delta and b chains.

Its subcellular location is the cell membrane. Its function is as follows. F(1)F(0) ATP synthase produces ATP from ADP in the presence of a proton or sodium gradient. F-type ATPases consist of two structural domains, F(1) containing the extramembraneous catalytic core and F(0) containing the membrane proton channel, linked together by a central stalk and a peripheral stalk. During catalysis, ATP synthesis in the catalytic domain of F(1) is coupled via a rotary mechanism of the central stalk subunits to proton translocation. This protein is part of the stalk that links CF(0) to CF(1). It either transmits conformational changes from CF(0) to CF(1) or is implicated in proton conduction. The polypeptide is ATP synthase subunit delta (Christiangramia forsetii (strain DSM 17595 / CGMCC 1.15422 / KT0803) (Gramella forsetii)).